A 161-amino-acid polypeptide reads, in one-letter code: MATLQSLADLNRANTQTSNPENEAPVHVQKLDAQGRAYATGKRKDAVARVWIKPGNGTVVVNGRAVETYFARPVLRMILRQPLEIVGRVDQYDITVTVKGGGLSGQAGAVRHGLSKALTYYEPELRSPLKREGFLTRDPRVVERKKYGRKKARRSFQFSKR.

Residues 1-21 (MATLQSLADLNRANTQTSNPE) are compositionally biased toward polar residues. The interval 1-25 (MATLQSLADLNRANTQTSNPENEAP) is disordered.

The protein belongs to the universal ribosomal protein uS9 family.

This Methylorubrum populi (strain ATCC BAA-705 / NCIMB 13946 / BJ001) (Methylobacterium populi) protein is Small ribosomal subunit protein uS9.